A 233-amino-acid chain; its full sequence is Enolase-phosphatase E1 (233 aa).

Residues D6 and E8 each coordinate Mg(2+). Substrate contacts are provided by residues 128 to 129 (SS) and K163. D188 contacts Mg(2+).

This sequence belongs to the HAD-like hydrolase superfamily. MasA/MtnC family. As to quaternary structure, monomer. The cofactor is Mg(2+).

The protein resides in the cytoplasm. The protein localises to the nucleus. The enzyme catalyses 5-methylsulfanyl-2,3-dioxopentyl phosphate + H2O = 1,2-dihydroxy-5-(methylsulfanyl)pent-1-en-3-one + phosphate. It participates in amino-acid biosynthesis; L-methionine biosynthesis via salvage pathway; L-methionine from S-methyl-5-thio-alpha-D-ribose 1-phosphate: step 3/6. The protein operates within amino-acid biosynthesis; L-methionine biosynthesis via salvage pathway; L-methionine from S-methyl-5-thio-alpha-D-ribose 1-phosphate: step 4/6. Its function is as follows. Bifunctional enzyme that catalyzes the enolization of 2,3-diketo-5-methylthiopentyl-1-phosphate (DK-MTP-1-P) into the intermediate 2-hydroxy-3-keto-5-methylthiopentenyl-1-phosphate (HK-MTPenyl-1-P), which is then dephosphorylated to form the acireductone 1,2-dihydroxy-3-keto-5-methylthiopentene (DHK-MTPene). The protein is Enolase-phosphatase E1 of Yarrowia lipolytica (strain CLIB 122 / E 150) (Yeast).